We begin with the raw amino-acid sequence, 559 residues long: Putative protease Do-like 3, mitochondrial (559 aa).

The N-terminal 48 residues, 1 to 48 (MSFLCVRTVSRFRSLSRALAPGFLLLHGNAVPKTAVFFRQQSSNTRLF), are a transit peptide targeting the mitochondrion. The segment at 59–81 (ENNSKSALKNKLPPGKEVSSKDA) is disordered. The segment at 100–292 (VFTVSSKPRL…FLNAIEESGE (193 aa)) is serine protease. Residues histidine 138, aspartate 169, and serine 247 each act as charge relay system in the active site. In terms of domain architecture, PDZ spans 300-380 (NLTYQKMDND…HLVSMKKPCE (81 aa)). The disordered stretch occupies residues 538–559 (SEDLQPKQQNKRSKVPPKSKEH). The segment covering 546–559 (QNKRSKVPPKSKEH) has biased composition (basic residues).

This sequence belongs to the peptidase S1C family.

It is found in the mitochondrion matrix. Putative serine protease. The polypeptide is Putative protease Do-like 3, mitochondrial (DEGP3) (Arabidopsis thaliana (Mouse-ear cress)).